Reading from the N-terminus, the 117-residue chain is Large ribosomal subunit protein bL20 (117 aa).

It belongs to the bacterial ribosomal protein bL20 family.

In terms of biological role, binds directly to 23S ribosomal RNA and is necessary for the in vitro assembly process of the 50S ribosomal subunit. It is not involved in the protein synthesizing functions of that subunit. This Geobacter metallireducens (strain ATCC 53774 / DSM 7210 / GS-15) protein is Large ribosomal subunit protein bL20.